The chain runs to 404 residues: Cysteine desulfurase IscS (404 aa).

Pyridoxal 5'-phosphate is bound by residues 75–76 (AT), Asn155, Gln183, and 203–205 (SSH). Lys206 bears the N6-(pyridoxal phosphate)lysine mark. Position 243 (Thr243) interacts with pyridoxal 5'-phosphate. The active-site Cysteine persulfide intermediate is the Cys328. Cys328 contacts [2Fe-2S] cluster.

This sequence belongs to the class-V pyridoxal-phosphate-dependent aminotransferase family. NifS/IscS subfamily. As to quaternary structure, homodimer. Forms a heterotetramer with IscU, interacts with other sulfur acceptors. Requires pyridoxal 5'-phosphate as cofactor.

It localises to the cytoplasm. It carries out the reaction (sulfur carrier)-H + L-cysteine = (sulfur carrier)-SH + L-alanine. It participates in cofactor biosynthesis; iron-sulfur cluster biosynthesis. In terms of biological role, master enzyme that delivers sulfur to a number of partners involved in Fe-S cluster assembly, tRNA modification or cofactor biosynthesis. Catalyzes the removal of elemental sulfur atoms from cysteine to produce alanine. Functions as a sulfur delivery protein for Fe-S cluster synthesis onto IscU, an Fe-S scaffold assembly protein, as well as other S acceptor proteins. This chain is Cysteine desulfurase IscS, found in Haemophilus influenzae (strain PittEE).